The following is a 162-amino-acid chain: FCS-Like Zinc finger 6 (162 aa).

2 disordered regions span residues 25-47 (NLPS…YGSN) and 121-162 (RQEQ…AAAV). Positions 27-47 (PSESEPSNQQKPTVASPYGSN) are enriched in polar residues. The FLZ-type zinc finger occupies 88-132 (HFLRSCALCERLLVPGRDIYMYRGDKAFCSSECRQEQMAQDERKE). A compositionally biased stretch (low complexity) spans 147-162 (APARAKPGKGRAAAAV).

This sequence belongs to the FLZ family. In terms of assembly, interacts with KIN10 and KIN11 via its FLZ-type zinc finger domain. Early expressed in hypocotyl and cotyledon. Later expressed in old or senescing leaves and in pistil, pollen and filament of open flowers.

It localises to the nucleus. The protein resides in the cytoplasm. Its subcellular location is the endoplasmic reticulum. Functionally, may act as an adapter to facilitate the interaction of SnRK1 complex with effector proteins, conferring tissue- and stimulus-type specific differences in the SnRK1 regulation pathway. Negatively regulates KIN10 leading to a repression of the SnRK1 signaling pathway. The polypeptide is FCS-Like Zinc finger 6 (Arabidopsis thaliana (Mouse-ear cress)).